A 316-amino-acid chain; its full sequence is Secondary metabolism regulator laeA (316 aa).

The protein belongs to the methyltransferase superfamily. LaeA methyltransferase family. As to quaternary structure, component of the heterotrimeric velvet complex composed of laeA, veA and velB; VeA acting as a bridging protein between laeA and velB.

The protein localises to the nucleus. The enzyme catalyses L-methionyl-[protein] + S-adenosyl-L-methionine = S-methyl-L-methionyl-[protein] + S-adenosyl-L-homocysteine. In terms of biological role, methyltransferase that performs automethylation. No other methyl-accepting substrate has been identified yet. Component of the velvet transcription factor complex that acts as a global regulator for secondary metabolite gene expression. Controls the biosynthetic gene cluster for beauvericin, a depsipeptide mycotoxin that functions as a virulence determinant. The velvet complex also regulates chromatin structure and transcription of siderophore biosynthetic genes and is required for infection of tomato plants. The velvet complex also governs expression of nitrate metabolism genes. In Fusarium oxysporum f. sp. lycopersici (strain 4287 / CBS 123668 / FGSC 9935 / NRRL 34936) (Fusarium vascular wilt of tomato), this protein is Secondary metabolism regulator laeA.